We begin with the raw amino-acid sequence, 1403 residues long: Eukaryotic translation initiation factor 4 gamma (1403 aa).

Polar residues-rich tracts occupy residues 1–11 (MSSKPPSNTPK), 19–39 (ASSQSNKSNSTKASENNTATA), and 50–60 (EPTNTSRANAQ). Disordered regions lie at residues 1 to 381 (MSSK…GSTP), 439 to 464 (SRSGSQVSDQVVESPNSSTLSPRNGF), 488 to 774 (VVVP…KRDL), and 861 to 1003 (AFSD…EALL). The residue at position 83 (serine 83) is a Phosphoserine. The segment covering 109-137 (DNTSKPSANSSAERTSSQHQKPETSSQIG) has biased composition (polar residues). 2 stretches are compositionally biased toward low complexity: residues 190-208 (SGVSSYSSKSQSVNSSVTS) and 231-248 (PRPTTSASNTNTSPANGA). A compositionally biased stretch (polar residues) spans 249 to 269 (PTNKPSTDINTTDPATQTTQV). Residues 270-291 (SASNSPALSGSSTPSNTSSRSN) are compositionally biased toward low complexity. Positions 298-308 (FSEKRHYDRYG) are enriched in basic and acidic residues. The span at 325–334 (NYNNSGNNRN) shows a compositional bias: low complexity. 3 stretches are compositionally biased toward polar residues: residues 346–381 (RNYNNQGAYPTYMSNGRSANQSPRNNPQNVNNGSTP), 439–460 (SRSGSQVSDQVVESPNSSTLSP), and 493–508 (KNASSPNPSETNSRAE). 4 positions are modified to phosphoserine: serine 452, serine 455, serine 456, and serine 459. The segment covering 537-714 (IQEKAEAEAK…GKREADKNPE (178 aa)) has biased composition (basic and acidic residues). The span at 720-737 (PLASSEANVDTSKQTNAT) shows a compositional bias: polar residues. The span at 741–754 (VVDKTKVEKLKASE) shows a compositional bias: basic and acidic residues. The segment covering 757-768 (STSSLSSPSHST) has biased composition (low complexity). Phosphoserine is present on residues serine 866 and serine 882. Residues 868-886 (RGMYSSSRQSSRSGSNTHS) are compositionally biased toward low complexity. Phosphothreonine is present on threonine 884. Phosphoserine occurs at positions 886, 911, 919, and 921. A Phosphotyrosine modification is found at tyrosine 923. Over residues 986–995 (KLTEKPAETK) the composition is skewed to basic and acidic residues. Positions 1009-1245 (QRKVKGSLNK…MDVMDSRKNG (237 aa)) constitute an MIF4G domain. The segment at 1266–1403 (AERKKALAES…QKDSNSKTSS (138 aa)) is disordered. Residues 1284-1295 (HGRDMNRGDSRM) show a composition bias toward basic and acidic residues. Composition is skewed to polar residues over residues 1302–1313 (PPFSSSDWSNNK), 1328–1341 (SGTQGSHGPTSLSS), and 1348–1358 (VSRTPSRQNSA). A Phosphoserine modification is found at serine 1333. A compositionally biased stretch (basic and acidic residues) spans 1383 to 1403 (LEEHDHDNDGGQKDSNSKTSS).

It belongs to the eukaryotic initiation factor 4G family.

It localises to the cytoplasm. It is found in the perinuclear region. Its function is as follows. Component of the protein complex eIF4F, which is involved in the recognition of the mRNA cap, ATP-dependent unwinding of 5'-terminal secondary structure and recruitment of mRNA to the ribosome. In Schizosaccharomyces pombe (strain 972 / ATCC 24843) (Fission yeast), this protein is Eukaryotic translation initiation factor 4 gamma (tif471).